A 178-amino-acid chain; its full sequence is MINWKEARSIKIPDGFKVSISGTTVTISYGGKTISKNFANNYVKLVEDGSTIKINASKNNSMVRGIVGTWASEINNMIKGLKDGFQYEMKIDYSHFPMRVSVKGKTVVIENFFGERSPRTAEIVGDTTVTVKGDRVYIAGISKKDVGETAANIERSTIIKGFDPRVFQDGIYLISKGE.

This sequence belongs to the universal ribosomal protein uL6 family. As to quaternary structure, part of the 50S ribosomal subunit.

Functionally, this protein binds to the 23S rRNA, and is important in its secondary structure. It is located near the subunit interface in the base of the L7/L12 stalk, and near the tRNA binding site of the peptidyltransferase center. The protein is Large ribosomal subunit protein uL6 of Thermoplasma acidophilum (strain ATCC 25905 / DSM 1728 / JCM 9062 / NBRC 15155 / AMRC-C165).